The chain runs to 126 residues: Antimicrobial protein 1 (126 aa).

Positions 1–24 are cleaved as a signal peptide; sequence MRSSLLLGLTVVLLLGVTVPPCMA.

In terms of tissue distribution, strongly expressed in gills, hemocytes and reproductive tract, with weaker expression in muscle, heart and digestive tract. Not detected in eyes and hepatopancreas (at protein level).

Its subcellular location is the secreted. Functionally, has antibacterial activity against the Gram-positive bacteria E.coli (MIC&lt;50 ug/ml) and P.aeruginosa (MIC&lt;25 ug/ml), and the Gram-negative bacteria S.aureus (MIC&lt;100 ug/ml) and S.pyogenes (MIC&lt;50 ug/ml). This Scylla serrata (Mud crab) protein is Antimicrobial protein 1.